Consider the following 658-residue polypeptide: PTS system 2-O-alpha-mannosyl-D-glycerate-specific EIIABC component (658 aa).

Over 1–313 the chain is Periplasmic; sequence MVLFYRAHWR…TELKQALLSG (313 aa). A PTS EIIA type-2 domain is found at 25-171; it reads TLTHRDALCL…DELLSALDDK (147 aa). Catalysis depends on His87, which acts as the Tele-phosphohistidine intermediate; for EIIA activity. His87 bears the Phosphohistidine; by HPr mark. One can recognise a PTS EIIB type-2 domain in the interval 186-282; that stretch reads IVCVTACPAG…AEALIQQALT (97 aa). Cys192 functions as the Phosphocysteine intermediate; for EIIB activity in the catalytic mechanism. Cys192 carries the phosphocysteine; by EIIA modification. Residues 306 to 641 form the PTS EIIC type-2 domain; that stretch reads LKQALLSGIS…AISTAILLMW (336 aa). The chain crosses the membrane as a helical span at residues 314–334; it reads ISFAVPLIVAGGTVLAVAVLL. The Cytoplasmic portion of the chain corresponds to 335–358; the sequence is SQIFGLQDLFNEENSWLWMYRKLG. A helical membrane pass occupies residues 359-379; that stretch reads GGLLGILMVPVLAAYTAYSLA. Residues 380–389 are Periplasmic-facing; the sequence is DKPALAPGFA. The helical transmembrane segment at 390–410 threads the bilayer; sequence AGLAANMIGSGFLGAVVGGLI. The Cytoplasmic portion of the chain corresponds to 411–433; it reads AGYLMRWVKNHLRLSSKFNGFLT. A helical membrane pass occupies residues 434-454; sequence FYLYPVLGTLGAGSLMLFVVG. Residues 455–474 lie on the Periplasmic side of the membrane; that stretch reads EPVAWINNSLTAWLNGLSGS. The chain crosses the membrane as a helical span at residues 475-495; it reads NALLLGAILGFMCSFDLGGPV. Over 496–500 the chain is Cytoplasmic; that stretch reads NKAAY. The helical transmembrane segment at 501-521 threads the bilayer; it reads AFCLGAMANGVYGPYAIFASV. The Periplasmic segment spans residues 522–551; sequence KMVSAFTVTASTMLAPRLFKEFEIETGKST. The helical transmembrane segment at 552 to 572 threads the bilayer; that stretch reads WLLGLAGITEGAIPMAIEDPL. Residue Arg573 is a topological domain, cytoplasmic. The helical transmembrane segment at 574–594 threads the bilayer; that stretch reads VIGSFVLGSMVTGAIVGAMNI. Topologically, residues 595 to 620 are periplasmic; sequence GLSTPGAGIFSLFLLHDNGAGGVMAA. The chain crosses the membrane as a helical span at residues 621 to 641; sequence IGWFGAALVGAAISTAILLMW. The Cytoplasmic segment spans residues 642–658; sequence RRHAVKHGNYLTDGVMP.

Its subcellular location is the cell inner membrane. The enzyme catalyses (2R)-2-O-(alpha-D-mannosyl)-glycerate(out) + N(pros)-phospho-L-histidyl-[protein] = (2R)-2-O-(6-phospho-alpha-D-mannosyl)-glycerate(in) + L-histidyl-[protein]. Functionally, the phosphoenolpyruvate-dependent sugar phosphotransferase system (sugar PTS), a major carbohydrate active transport system, catalyzes the phosphorylation of incoming sugar substrates concomitantly with their translocation across the cell membrane. This system is involved in mannosyl-D-glycerate transport. Also involved in thermoinduction of ompC. The chain is PTS system 2-O-alpha-mannosyl-D-glycerate-specific EIIABC component from Escherichia coli (strain K12).